The chain runs to 167 residues: Peroxiredoxin Pen c 3 (167 aa).

Positions 3–167 (LKAGDSFPEG…SRADHVLKQL (165 aa)) constitute a Thioredoxin domain. Residue Cys60 is the Cysteine sulfenic acid (-SOH) intermediate of the active site.

Belongs to the peroxiredoxin family. Prx5 subfamily. As to quaternary structure, homodimer; disulfide-linked, upon oxidation.

It carries out the reaction a hydroperoxide + [thioredoxin]-dithiol = an alcohol + [thioredoxin]-disulfide + H2O. Thiol-specific peroxidase that catalyzes the reduction of hydrogen peroxide and organic hydroperoxides to water and alcohols, respectively. Plays a role in cell protection against oxidative stress by detoxifying peroxides and as sensor of hydrogen peroxide-mediated signaling events. This chain is Peroxiredoxin Pen c 3, found in Penicillium citrinum.